The following is a 129-amino-acid chain: Transcription antitermination protein NusB (129 aa).

This sequence belongs to the NusB family.

Involved in transcription antitermination. Required for transcription of ribosomal RNA (rRNA) genes. Binds specifically to the boxA antiterminator sequence of the ribosomal RNA (rrn) operons. This chain is Transcription antitermination protein NusB, found in Staphylococcus epidermidis (strain ATCC 35984 / DSM 28319 / BCRC 17069 / CCUG 31568 / BM 3577 / RP62A).